We begin with the raw amino-acid sequence, 84 residues long: Small ribosomal subunit protein uS17 (84 aa).

This sequence belongs to the universal ribosomal protein uS17 family. Part of the 30S ribosomal subunit.

Functionally, one of the primary rRNA binding proteins, it binds specifically to the 5'-end of 16S ribosomal RNA. This chain is Small ribosomal subunit protein uS17, found in Clostridium botulinum (strain ATCC 19397 / Type A).